Reading from the N-terminus, the 609-residue chain is Alpha-fetoprotein (609 aa).

The first 18 residues, 1-18, serve as a signal peptide directing secretion; the sequence is MKWVESIFLIFLLNFTES. Albumin domains follow at residues 19–210, 211–402, and 403–601; these read RTLH…ATVT, KELR…EELQ, and KYIQ…KLIS. Residue H22 participates in Cu(2+) binding. Disulfide bonds link C99–C114, C113–C124, C148–C193, C192–C201, C224–C270, C269–C277, C289–C303, and C302–C313. 3 positions are modified to phosphoserine; by FAM20C: S111, S115, and S117. N251 is a glycosylation site (N-linked (GlcNAc...) asparagine). S344 carries the phosphoserine; by FAM20C modification. 7 disulfides stabilise this stretch: C384-C393, C416-C462, C461-C472, C485-C501, C500-C511, C538-C583, and C582-C591. A phosphoserine; by FAM20C mark is found at S444 and S445.

This sequence belongs to the ALB/AFP/VDB family. In terms of assembly, dimeric and trimeric forms have been found in addition to the monomeric form. Independent studies suggest heterogeneity of the N-terminal sequence of the mature protein and of the cleavage site of the signal sequence. In terms of processing, sulfated. In terms of tissue distribution, plasma. Synthesized by the fetal liver and yolk sac.

It localises to the secreted. Functionally, binds copper, nickel, and fatty acids as well as, and bilirubin less well than, serum albumin. Only a small percentage (less than 2%) of the human AFP shows estrogen-binding properties. This Homo sapiens (Human) protein is Alpha-fetoprotein (AFP).